Consider the following 128-residue polypeptide: uncharacterized protein (128 aa).

2 disordered regions span residues 62–83 (LNPS…SPRV) and 101–128 (FAAS…RYQP). Low complexity predominate over residues 101-114 (FAASSSSTAPVTVT).

It is found in the cytoplasm. Its subcellular location is the nucleus. This is an uncharacterized protein from Saccharomyces cerevisiae (strain ATCC 204508 / S288c) (Baker's yeast).